The primary structure comprises 273 residues: uncharacterized protein (273 aa).

In terms of domain architecture, AB hydrolase-1 spans 29 to 131 (TLVCVHGFLS…VVLLCSSGYL (103 aa)). Residues Ser-102 and His-254 contribute to the active site.

This sequence belongs to the DmpD/TodF/XylF esterase family.

This is an uncharacterized protein from Bacillus subtilis (strain 168).